Reading from the N-terminus, the 366-residue chain is A-type ATP synthase subunit C (366 aa).

It belongs to the V-ATPase V0D/AC39 subunit family. As to quaternary structure, has multiple subunits with at least A(3), B(3), C, D, E, F, H, I and proteolipid K(x).

It localises to the cell membrane. Component of the A-type ATP synthase that produces ATP from ADP in the presence of a proton gradient across the membrane. In Thermococcus gammatolerans (strain DSM 15229 / JCM 11827 / EJ3), this protein is A-type ATP synthase subunit C.